The chain runs to 238 residues: MRPNNRAINQPRPIKITRHYTKHAEGSVLVEFGDTKVLCTATVDESVPRFLKGQGQGWVTAEYGMLPRSTHSRMQREAAKGKQGGRTMEIQRLIARSLRAMVDLEALGERSVTLDCDVIQADGGTRTASITGACVALIDAVNGLVDNGTLTVSPLKGLVAAISVGIVDGTPVCDLEYVEDSAAETDMNVVMMEDGRMIEVQGTAEGEPFSHEELLTLLNLAKQGCKRIFEAQRAALAD.

Phosphate-binding positions include arginine 86 and 124 to 126 (GTR).

It belongs to the RNase PH family. Homohexameric ring arranged as a trimer of dimers.

It carries out the reaction tRNA(n+1) + phosphate = tRNA(n) + a ribonucleoside 5'-diphosphate. Functionally, phosphorolytic 3'-5' exoribonuclease that plays an important role in tRNA 3'-end maturation. Removes nucleotide residues following the 3'-CCA terminus of tRNAs; can also add nucleotides to the ends of RNA molecules by using nucleoside diphosphates as substrates, but this may not be physiologically important. Probably plays a role in initiation of 16S rRNA degradation (leading to ribosome degradation) during starvation. In Actinobacillus succinogenes (strain ATCC 55618 / DSM 22257 / CCUG 43843 / 130Z), this protein is Ribonuclease PH.